A 195-amino-acid polypeptide reads, in one-letter code: Peroxiredoxin (195 aa).

The Thioredoxin domain occupies 4-162 (AMIGKPAPEF…TLRLVQAFQF (159 aa)). Cysteine 49 acts as the Cysteine sulfenic acid (-SOH) intermediate in catalysis.

Belongs to the peroxiredoxin family. AhpC/Prx1 subfamily. As to quaternary structure, homodimer; disulfide-linked, upon oxidation.

It catalyses the reaction a hydroperoxide + [thioredoxin]-dithiol = an alcohol + [thioredoxin]-disulfide + H2O. Its function is as follows. Thiol-specific peroxidase that catalyzes the reduction of hydrogen peroxide and organic hydroperoxides to water and alcohols, respectively. Plays a role in cell protection against oxidative stress by detoxifying peroxides and as sensor of hydrogen peroxide-mediated signaling events. The sequence is that of Peroxiredoxin from Ascaris suum (Pig roundworm).